The primary structure comprises 516 residues: Squalene epoxidase 5 (516 aa).

2 helical membrane-spanning segments follow: residues 3–23 (FTNVCLWTLLAFMLTWTVFYV) and 45–65 (ATDVIIVGAGVGGSALAYALA). Residues 55-56 (VG), 75-76 (ER), R83, F88, R156, V172, D335, and M348 each bind FAD. Residues 446-466 (LIYHLCAITLSSIGHLLSPFP) form a helical membrane-spanning segment.

The protein belongs to the squalene monooxygenase family. FAD is required as a cofactor. As to expression, expressed in seedlings, leaves, stems and inflorescences. Detected in siliques.

The protein localises to the membrane. The enzyme catalyses squalene + reduced [NADPH--hemoprotein reductase] + O2 = (S)-2,3-epoxysqualene + oxidized [NADPH--hemoprotein reductase] + H2O + H(+). Its pathway is terpene metabolism; lanosterol biosynthesis; lanosterol from farnesyl diphosphate: step 2/3. Functionally, catalyzes the stereospecific oxidation of squalene to (S)-2,3-epoxysqualene, and is considered to be a rate-limiting enzyme in steroid biosynthesis. The polypeptide is Squalene epoxidase 5 (SQE5) (Arabidopsis thaliana (Mouse-ear cress)).